The primary structure comprises 159 residues: UPF0178 protein AZC_4000 (159 aa).

It belongs to the UPF0178 family.

The protein is UPF0178 protein AZC_4000 of Azorhizobium caulinodans (strain ATCC 43989 / DSM 5975 / JCM 20966 / LMG 6465 / NBRC 14845 / NCIMB 13405 / ORS 571).